The primary structure comprises 274 residues: Thymidylate synthase (274 aa).

R21 contacts dUMP. H51 is a (6R)-5,10-methylene-5,6,7,8-tetrahydrofolate binding site. 123–124 (RR) contacts dUMP. The Nucleophile role is filled by C156. DUMP contacts are provided by residues 176–179 (RSAD), N187, and 217–219 (HIY). Position 179 (D179) interacts with (6R)-5,10-methylene-5,6,7,8-tetrahydrofolate. Residue S273 coordinates (6R)-5,10-methylene-5,6,7,8-tetrahydrofolate.

Belongs to the thymidylate synthase family. Bacterial-type ThyA subfamily. In terms of assembly, homodimer.

Its subcellular location is the cytoplasm. It carries out the reaction dUMP + (6R)-5,10-methylene-5,6,7,8-tetrahydrofolate = 7,8-dihydrofolate + dTMP. Its pathway is pyrimidine metabolism; dTTP biosynthesis. Catalyzes the reductive methylation of 2'-deoxyuridine-5'-monophosphate (dUMP) to 2'-deoxythymidine-5'-monophosphate (dTMP) while utilizing 5,10-methylenetetrahydrofolate (mTHF) as the methyl donor and reductant in the reaction, yielding dihydrofolate (DHF) as a by-product. This enzymatic reaction provides an intracellular de novo source of dTMP, an essential precursor for DNA biosynthesis. This chain is Thymidylate synthase, found in Francisella tularensis subsp. tularensis (strain SCHU S4 / Schu 4).